The sequence spans 1470 residues: Niemann-Pick type C1-related protein (1470 aa).

Topologically, residues 1-3 are cytoplasmic; it reads MFV. Residues 4-34 lie within the membrane without spanning it; sequence KNFIHKLKELKQKSLDKFANLLYDYGGYVYD. Position 35 (R35) is a topological domain, cytoplasmic. Residues 36 to 56 form a helical membrane-spanning segment; that stretch reads PCTFIICSLICCLLLTCGFYF. At 57-493 the chain is on the extracellular side; it reads KEHEKDIYKL…DEVDRISKID (437 aa). N-linked (GlcNAc...) asparagine glycans are attached at residues N78, N165, N294, and N361. A helical transmembrane segment spans residues 494–514; that stretch reads NLTRLLLLIGVLLIFMYALFN. The SSD domain occupies 494 to 653; that stretch reads NLTRLLLLIG…LTFLLSFLCI (160 aa). Residues 515–524 are Cytoplasmic-facing; sequence NVTSVLYRSK. A helical transmembrane segment spans residues 525–549; the sequence is PLCAVMGIFCGFLGFLSGSGFLYFL. Residues 550 to 554 lie on the Extracellular side of the membrane; sequence GVKSV. The chain crosses the membrane as a helical span at residues 555–582; sequence PPAETVPFLVIGVGVDDVFVILNSYSLL. The Cytoplasmic segment spans residues 583–587; that stretch reads FMVKD. A helical transmembrane segment spans residues 588–619; it reads NKKRIQMCLKDSALAITVTTLTNIIAFLISAI. Over 620-622 the chain is Extracellular; the sequence is SPF. Residues 623–659 form a helical membrane-spanning segment; it reads YSICAFSLFTASSLFFGYLMVLTFLLSFLCIEAKLEK. The Cytoplasmic portion of the chain corresponds to 660 to 663; that stretch reads KKRN. An intramembrane segment occupies 664 to 673; that stretch reads IFTGTFHLFR. Topologically, residues 674-1057 are cytoplasmic; the sequence is SIFMKSSKKN…IYEEPKGNIG (384 aa). An intramembrane segment occupies 1058-1073; the sequence is KYFRSLVKNYYVPFLS. A topological domain (cytoplasmic) is located at residue S1074. The chain crosses the membrane as a helical span at residues 1075–1098; it reads RFGKTIVYIMFTIIIAMSIYGCTL. The Extracellular portion of the chain corresponds to 1099 to 1300; that stretch reads MKKGIKYDKA…NHNVQMVCFH (202 aa). N1218 carries an N-linked (GlcNAc...) asparagine glycan. Residues 1301–1334 form a helical membrane-spanning segment; the sequence is LSSIFNETDESIIEVTLINLGITILTILVVTAYI. Residues 1335 to 1337 are Cytoplasmic-facing; that stretch reads IKG. A helical membrane pass occupies residues 1338-1361; sequence FYSCVIIALIIFLIDLCIFGFMCL. Topologically, residues 1362–1367 are extracellular; the sequence is CGITMN. A helical membrane pass occupies residues 1368-1394; sequence IISMVILVLSVGFSIDHTSHIVQAFSH. The Cytoplasmic segment spans residues 1395–1399; sequence SMGRT. The chain crosses the membrane as a helical span at residues 1400 to 1431; that stretch reads RDEKMKESLHLMIGPVLHSGLSTWFVISTLFF. Residues 1432–1434 are Extracellular-facing; that stretch reads SNK. Residues 1435 to 1466 traverse the membrane as a helical segment; that stretch reads DFTVIFFQTLSLVLFFSITFSSMFLPVLLSSF. Residues 1467–1470 lie on the Cytoplasmic side of the membrane; the sequence is GPLH.

Belongs to the patched family.

The protein resides in the cell membrane. The enzyme catalyses cholesterol(in) = cholesterol(out). Its function is as follows. Facilitates cholesterol efflux from membranes in a pH-dependent manner. Required for maintaining normal parasite plasma membrane lipid composition. Required for the proper functioning of digestive vacuole. Required for the viability of blood-stage parasites. This chain is Niemann-Pick type C1-related protein, found in Plasmodium falciparum (isolate 3D7).